Reading from the N-terminus, the 156-residue chain is Ribosomal RNA large subunit methyltransferase H (156 aa).

S-adenosyl-L-methionine-binding positions include Leu-73, Gly-104, and 123-128 (LSALTL).

This sequence belongs to the RNA methyltransferase RlmH family. As to quaternary structure, homodimer.

The protein localises to the cytoplasm. The catalysed reaction is pseudouridine(1915) in 23S rRNA + S-adenosyl-L-methionine = N(3)-methylpseudouridine(1915) in 23S rRNA + S-adenosyl-L-homocysteine + H(+). Functionally, specifically methylates the pseudouridine at position 1915 (m3Psi1915) in 23S rRNA. The sequence is that of Ribosomal RNA large subunit methyltransferase H from Vibrio parahaemolyticus serotype O3:K6 (strain RIMD 2210633).